The chain runs to 500 residues: Trehalose-6-phosphate synthase (500 aa).

R28 contributes to the D-glucose 6-phosphate binding site. 48-49 contributes to the UDP-alpha-D-glucose binding site; sequence GG. D-glucose 6-phosphate-binding residues include Y108 and D162. 2 residues coordinate UDP-alpha-D-glucose: R304 and K309. R342 is a D-glucose 6-phosphate binding site. 407-411 is a binding site for UDP-alpha-D-glucose; the sequence is LVAKE.

Belongs to the glycosyltransferase 20 family. Homotetramer.

It carries out the reaction ADP-alpha-D-glucose + D-glucose 6-phosphate = alpha,alpha-trehalose 6-phosphate + ADP + H(+). It catalyses the reaction CDP-alpha-D-glucose + D-glucose 6-phosphate = alpha,alpha-trehalose 6-phosphate + CDP + H(+). The catalysed reaction is GDP-alpha-D-glucose + D-glucose 6-phosphate = alpha,alpha-trehalose 6-phosphate + GDP + H(+). The enzyme catalyses TDP-alpha-D-glucose + D-glucose 6-phosphate = 5-methyl-UDP + alpha,alpha-trehalose 6-phosphate + H(+). It carries out the reaction D-glucose 6-phosphate + UDP-alpha-D-glucose = alpha,alpha-trehalose 6-phosphate + UDP + H(+). The protein operates within glycan biosynthesis; trehalose biosynthesis. Probably involved in the osmoprotection via the biosynthesis of trehalose and in the production of glycogen and alpha-glucan via the TreS-Pep2 branch involved in the biosynthesis of maltose-1-phosphate (M1P). Catalyzes the transfer of glucose from UDP-glucose (UDP-Glc) to D-glucose 6-phosphate (Glc-6-P) to form trehalose-6-phosphate. Probably also able to use ADP-Glc, CDP-Glc, GDP-Glc and TDP-Glc as glucosyl donors. This is Trehalose-6-phosphate synthase from Mycobacterium bovis (strain ATCC BAA-935 / AF2122/97).